A 651-amino-acid polypeptide reads, in one-letter code: Acetyl-coenzyme A synthetase (651 aa).

CoA-binding positions include 191–194, Thr311, and Asn335; that span reads RGGK. Residues 387–389, 411–416, Asp500, and Arg515 each bind ATP; these read GEP and DTWWQT. Ser523 serves as a coordination point for CoA. Residue Arg526 participates in ATP binding. Val537, His539, and Val542 together coordinate Mg(2+). A CoA-binding site is contributed by Arg584. Lys609 bears the N6-acetyllysine mark.

This sequence belongs to the ATP-dependent AMP-binding enzyme family. Mg(2+) serves as cofactor. In terms of processing, acetylated. Deacetylation by the SIR2-homolog deacetylase activates the enzyme.

It carries out the reaction acetate + ATP + CoA = acetyl-CoA + AMP + diphosphate. Catalyzes the conversion of acetate into acetyl-CoA (AcCoA), an essential intermediate at the junction of anabolic and catabolic pathways. AcsA undergoes a two-step reaction. In the first half reaction, AcsA combines acetate with ATP to form acetyl-adenylate (AcAMP) intermediate. In the second half reaction, it can then transfer the acetyl group from AcAMP to the sulfhydryl group of CoA, forming the product AcCoA. The sequence is that of Acetyl-coenzyme A synthetase from Stutzerimonas stutzeri (strain A1501) (Pseudomonas stutzeri).